The chain runs to 463 residues: Bifunctional protein GlmU (463 aa).

Residues 1–228 (MEQALSIVVL…PAEVQGVNDR (228 aa)) form a pyrophosphorylase region. UDP-N-acetyl-alpha-D-glucosamine contacts are provided by residues 10–13 (LAAG), lysine 24, glutamine 75, 80–81 (GT), 102–104 (YGD), glycine 138, glutamate 153, asparagine 168, and asparagine 226. Residue aspartate 104 participates in Mg(2+) binding. Asparagine 226 lines the Mg(2+) pocket. Positions 229–249 (VQLAAAERVWQRRQAEDWMRA) are linker. The interval 250–463 (GVTILDPDRF…RPDRGEGSDA (214 aa)) is N-acetyltransferase. 2 residues coordinate UDP-N-acetyl-alpha-D-glucosamine: arginine 332 and lysine 350. Histidine 362 functions as the Proton acceptor in the catalytic mechanism. UDP-N-acetyl-alpha-D-glucosamine is bound by residues tyrosine 365 and asparagine 376. Residues alanine 379, 385-386 (NY), serine 404, alanine 422, and arginine 439 contribute to the acetyl-CoA site. Residues 437 to 463 (VARSAQRSIHGWRRPGQRPDRGEGSDA) form a disordered region. Residues 453–463 (QRPDRGEGSDA) show a composition bias toward basic and acidic residues.

It in the N-terminal section; belongs to the N-acetylglucosamine-1-phosphate uridyltransferase family. In the C-terminal section; belongs to the transferase hexapeptide repeat family. Homotrimer. Requires Mg(2+) as cofactor.

The protein resides in the cytoplasm. It catalyses the reaction alpha-D-glucosamine 1-phosphate + acetyl-CoA = N-acetyl-alpha-D-glucosamine 1-phosphate + CoA + H(+). The catalysed reaction is N-acetyl-alpha-D-glucosamine 1-phosphate + UTP + H(+) = UDP-N-acetyl-alpha-D-glucosamine + diphosphate. It participates in nucleotide-sugar biosynthesis; UDP-N-acetyl-alpha-D-glucosamine biosynthesis; N-acetyl-alpha-D-glucosamine 1-phosphate from alpha-D-glucosamine 6-phosphate (route II): step 2/2. Its pathway is nucleotide-sugar biosynthesis; UDP-N-acetyl-alpha-D-glucosamine biosynthesis; UDP-N-acetyl-alpha-D-glucosamine from N-acetyl-alpha-D-glucosamine 1-phosphate: step 1/1. It functions in the pathway bacterial outer membrane biogenesis; LPS lipid A biosynthesis. Its function is as follows. Catalyzes the last two sequential reactions in the de novo biosynthetic pathway for UDP-N-acetylglucosamine (UDP-GlcNAc). The C-terminal domain catalyzes the transfer of acetyl group from acetyl coenzyme A to glucosamine-1-phosphate (GlcN-1-P) to produce N-acetylglucosamine-1-phosphate (GlcNAc-1-P), which is converted into UDP-GlcNAc by the transfer of uridine 5-monophosphate (from uridine 5-triphosphate), a reaction catalyzed by the N-terminal domain. This is Bifunctional protein GlmU from Alkalilimnicola ehrlichii (strain ATCC BAA-1101 / DSM 17681 / MLHE-1).